Reading from the N-terminus, the 787-residue chain is Endonuclease MutS2 (787 aa).

Residue 335–342 (GPNTGGKT) coordinates ATP. The region spanning 712 to 787 (LDLRGERYED…GLGNTVIELK (76 aa)) is the Smr domain.

The protein belongs to the DNA mismatch repair MutS family. MutS2 subfamily. Homodimer. Binds to stalled ribosomes, contacting rRNA.

Functionally, endonuclease that is involved in the suppression of homologous recombination and thus may have a key role in the control of bacterial genetic diversity. Its function is as follows. Acts as a ribosome collision sensor, splitting the ribosome into its 2 subunits. Detects stalled/collided 70S ribosomes which it binds and splits by an ATP-hydrolysis driven conformational change. Acts upstream of the ribosome quality control system (RQC), a ribosome-associated complex that mediates the extraction of incompletely synthesized nascent chains from stalled ribosomes and their subsequent degradation. Probably generates substrates for RQC. The polypeptide is Endonuclease MutS2 (Shouchella clausii (strain KSM-K16) (Alkalihalobacillus clausii)).